The following is a 696-amino-acid chain: Methionine synthase reductase (696 aa).

One can recognise a Flavodoxin-like domain in the interval 4–147; that stretch reads FLLLYATQRG…VVEPWIDGLW (144 aa). FMN-binding positions include 10–14 and 93–124; these read TQRGQ and LLGLGDSEYTYFCNGGKVIDKRLQELGAQRFY. The segment at 166-245 is hinge; the sequence is TLSRASDAPL…SSLSIPAVPP (80 aa). Residues Ser171 and Ser188 each carry the phosphoserine modification. The FAD-binding FR-type domain occupies 269–531; it reads DPSFQVPISK…PRATNAFHLP (263 aa). Lys289 is an NADP(+) binding site. Residues 449–452 and 485–488 contribute to the FAD site; these read RPYS and GVCT. NADP(+) contacts are provided by residues 608 to 609, 622 to 624, and Asp657; these read SR and YVQ. Trp695 is a binding site for FAD.

As to quaternary structure, forms a multiprotein complex with MMACHC, MMADHC and MTR. Requires FAD as cofactor. It depends on FMN as a cofactor.

It is found in the cytoplasm. The enzyme catalyses 2 methylcob(III)alamin-[methionine synthase] + 2 S-adenosyl-L-homocysteine + NADP(+) + H(+) = 2 cob(II)alamin-[methionine synthase] + 2 S-adenosyl-L-methionine + NADPH. It catalyses the reaction 2 cob(II)alamin + A + 2 H2O + 2 H(+) = 2 aquacob(III)alamin + AH2. In terms of biological role, key enzyme in methionine and folate homeostasis responsible for the reactivation of methionine synthase (MTR/MS) activity by catalyzing the reductive methylation of MTR-bound cob(II)alamin. Cobalamin (vitamin B12) forms a complex with MTR to serve as an intermediary in methyl transfer reactions that cycles between MTR-bound methylcob(III)alamin and MTR bound-cob(I)alamin forms, and occasional oxidative escape of the cob(I)alamin intermediate during the catalytic cycle leads to the inactive cob(II)alamin species. The processing of cobalamin in the cytosol occurs in a multiprotein complex composed of at least MMACHC, MMADHC, MTRR and MTR which may contribute to shuttle safely and efficiently cobalamin towards MTR in order to produce methionine. Also necessary for the utilization of methyl groups from the folate cycle, thereby affecting transgenerational epigenetic inheritance. Also acts as a molecular chaperone for methionine synthase by stabilizing apoMTR and incorporating methylcob(III)alamin into apoMTR to form the holoenzyme. Also serves as an aquacob(III)alamin reductase by reducing aquacob(III)alamin to cob(II)alamin; this reduction leads to stimulation of the conversion of apoMTR and aquacob(III)alamin to MTR holoenzyme. The polypeptide is Methionine synthase reductase (Mus musculus (Mouse)).